An 84-amino-acid chain; its full sequence is MKANIHPDYHPVVFQDASTGTTFLTRSTVTSDRTALWSDGNTYPLVVVDVTSESHPFWTGAQRVMDTAGRVEKFERRYGVRKRP.

Belongs to the bacterial ribosomal protein bL31 family. Type B subfamily. Part of the 50S ribosomal subunit.

Its function is as follows. Binds the 23S rRNA. This Rhodococcus jostii (strain RHA1) protein is Large ribosomal subunit protein bL31B.